Reading from the N-terminus, the 118-residue chain is Large ribosomal subunit protein bL20 (118 aa).

This sequence belongs to the bacterial ribosomal protein bL20 family.

In terms of biological role, binds directly to 23S ribosomal RNA and is necessary for the in vitro assembly process of the 50S ribosomal subunit. It is not involved in the protein synthesizing functions of that subunit. In Lactobacillus delbrueckii subsp. bulgaricus (strain ATCC BAA-365 / Lb-18), this protein is Large ribosomal subunit protein bL20.